Reading from the N-terminus, the 258-residue chain is Lysine-rich coiled-coil protein 1 (258 aa).

The interval 142–258 (DNSTSTHQAS…MLWDQSILGF (117 aa)) is disordered. Residues 150 to 161 (ASHKQIHQKRKR) are compositionally biased toward basic residues. 3 stretches are compositionally biased toward basic and acidic residues: residues 162–175 (HPEE…EEWS), 183–213 (CKEI…TEKL), and 220–232 (KGRD…EERK). Residues 211–248 (EKLKNRKEKKGRDVVSKKEERKRTKKKKEQGQERTEEE) adopt a coiled-coil conformation.

The chain is Lysine-rich coiled-coil protein 1 (KRCC1) from Pongo abelii (Sumatran orangutan).